The chain runs to 485 residues: MQISNSYLQLGDDFYLPSTPRQPSNPQLFLWNQGLAESLGVADFLAQEQEDPAGFFSGGRLLPNSKPVALAYAGHQFGHFNPRLGDGRAHLLGELRGDTDMVFDVQLKGSGATPFSRGGDGLCGLGPAVREFIMSEAMAALGVPTSRTLAVVTTGDEVYRGDAVPGAVVCRVAASHLRVGTFEYFYAQGNKDAIERLCDYAISRHFPELASSEGPEKYSGFLRAVFSRQVELVCEWLRVGFVHGVMNTDNTTISGETIDYGPCAMISTYNPNTVFSSIDAMGRYRFGHQPSIAHWNMARLTECFLPLLDQDSKQATAIGESLLGEFPQNFEQRYHHMLASKTGVRLQGDSDKALCEDFLQLLRKQGLDYTNSFDSLTRSLIDPQHEDRCASQWPEWYQAWSARIEQQGRPREVVAEGMRRHNPVVIPRNHHMEAVIDECIKNGSPDAAKSWLKVLRRPYQDLPTTPNYQDPPADGDRSYQTFCGT.

ATP is bound by residues Gly-85, Gly-87, Arg-88, Lys-108, Asp-120, Gly-121, Arg-171, and Arg-178. The Proton acceptor role is filled by Asp-249. Mg(2+) contacts are provided by Asn-250 and Asp-259. Asp-259 serves as a coordination point for ATP. The tract at residues 462-485 is disordered; that stretch reads LPTTPNYQDPPADGDRSYQTFCGT.

Belongs to the SELO family. The cofactor is Mg(2+). Requires Mn(2+) as cofactor.

The enzyme catalyses L-seryl-[protein] + ATP = 3-O-(5'-adenylyl)-L-seryl-[protein] + diphosphate. It catalyses the reaction L-threonyl-[protein] + ATP = 3-O-(5'-adenylyl)-L-threonyl-[protein] + diphosphate. The catalysed reaction is L-tyrosyl-[protein] + ATP = O-(5'-adenylyl)-L-tyrosyl-[protein] + diphosphate. It carries out the reaction L-histidyl-[protein] + UTP = N(tele)-(5'-uridylyl)-L-histidyl-[protein] + diphosphate. The enzyme catalyses L-seryl-[protein] + UTP = O-(5'-uridylyl)-L-seryl-[protein] + diphosphate. It catalyses the reaction L-tyrosyl-[protein] + UTP = O-(5'-uridylyl)-L-tyrosyl-[protein] + diphosphate. Functionally, nucleotidyltransferase involved in the post-translational modification of proteins. It can catalyze the addition of adenosine monophosphate (AMP) or uridine monophosphate (UMP) to a protein, resulting in modifications known as AMPylation and UMPylation. The sequence is that of Protein nucleotidyltransferase YdiU from Teredinibacter turnerae (strain ATCC 39867 / T7901).